We begin with the raw amino-acid sequence, 1052 residues long: Fibroblast growth factor receptor homolog 2 (1052 aa).

The first 19 residues, 1-19 (MAKVPITLVMIIAIVSAAA), serve as a signal peptide directing secretion. Over 20–600 (DLGCDYGHHR…EIYALLHAHP (581 aa)) the chain is Extracellular. Ig-like C2-type domains lie at 23-117 (CDYG…IASF), 124-230 (PALP…PTQL), and 240-340 (PMLK…RTVA). Cysteines 30 and 90 form a disulfide. N-linked (GlcNAc...) asparagine glycosylation is found at asparagine 99, asparagine 137, asparagine 175, asparagine 181, asparagine 249, and asparagine 257. A disulfide bond links cysteine 164 and cysteine 217. Cysteine 262 and cysteine 329 are joined by a disulfide. The span at 358-372 (TTTTTVASPIPTAST) shows a compositional bias: low complexity. A disordered region spans residues 358–393 (TTTTTVASPIPTASTGEDNDDDVENPAAEASGGVGP). Ig-like C2-type domains lie at 393–478 (PPVF…FSVQ) and 487–585 (PIIV…RVVS). The cysteines at positions 416 and 462 are disulfide-linked. N-linked (GlcNAc...) asparagine glycosylation is found at asparagine 423, asparagine 444, asparagine 494, asparagine 500, asparagine 526, asparagine 541, asparagine 546, asparagine 555, and asparagine 576. Cysteine 507 and cysteine 566 form a disulfide bridge. The helical transmembrane segment at 601 to 626 (LGFTLAAITIVALFLLGSAFITFMLR) threads the bilayer. Over 627 to 1052 (RLRREKLLKL…LRYQYTYKFN (426 aa)) the chain is Cytoplasmic. In terms of domain architecture, Protein kinase spans 712 to 1000 (LSLGSILGEG…ELVESFDGIL (289 aa)). ATP-binding positions include 718-726 (LGEGAFGRV) and lysine 748. The active-site Proton acceptor is aspartate 864. Tyrosine 895 carries the phosphotyrosine; by autocatalysis modification. The interval 1017–1038 (PMLETPPSSGDEDDGSDTETFR) is disordered.

Belongs to the protein kinase superfamily. Tyr protein kinase family. Fibroblast growth factor receptor subfamily. As to expression, during embryogenesis, expression is seen in mesoderm, endodermal precursor cells, CNS midline cells and trachea and salivary duct ectodermal cells.

Its subcellular location is the membrane. The catalysed reaction is L-tyrosyl-[protein] + ATP = O-phospho-L-tyrosyl-[protein] + ADP + H(+). Its function is as follows. May be required for patterning of muscle precursor cells: generation of mesodermal and endodermal layers, invaginations of various types of cells, and CNS formation. Essential for the ability of the migrating tracheal and midline cells to recognize external guiding cues. The polypeptide is Fibroblast growth factor receptor homolog 2 (btl) (Drosophila melanogaster (Fruit fly)).